Consider the following 373-residue polypeptide: Muscleblind-like protein 2 (373 aa).

C3H1-type zinc fingers lie at residues 13 to 41 (WLTL…HPPK), 47 to 73 (NGRV…HPPT), 176 to 204 (TDKL…HPAD), and 212 to 238 (DNTV…HPPA).

The protein belongs to the muscleblind family. As to quaternary structure, interacts with ITGA3. Expressed in heart, brain, placenta, lung, liver, skeletal muscle, kidney and pancreas.

Its subcellular location is the nucleus. It localises to the cytoplasm. Functionally, mediates pre-mRNA alternative splicing regulation. Acts either as activator or repressor of splicing on specific pre-mRNA targets. Inhibits cardiac troponin-T (TNNT2) pre-mRNA exon inclusion but induces insulin receptor (IR) pre-mRNA exon inclusion in muscle. Antagonizes the alternative splicing activity pattern of CELF proteins. RNA-binding protein that binds to 5'ACACCC-3' core sequence, termed zipcode, within the 3'UTR of ITGA3. Binds to CUG triplet repeat expansion in myotonic dystrophy muscle cells by sequestering the target RNAs. Together with RNA binding proteins RBPMS and RBFOX2, activates vascular smooth muscle cells alternative splicing events. Regulates NCOR2 alternative splicing. Seems to regulate expression and localization of ITGA3 by transporting it from the nucleus to cytoplasm at adhesion plaques. May play a role in myotonic dystrophy pathophysiology (DM). The protein is Muscleblind-like protein 2 (MBNL2) of Homo sapiens (Human).